The chain runs to 47 residues: Photosystem II reaction center protein K (47 aa).

A propeptide spanning residues 1–10 (MASFTLDLLA) is cleaved from the precursor. A helical transmembrane segment spans residues 19-39 (FSPLIDILPLIPVFFLLLAFV).

The protein belongs to the PsbK family. PSII is composed of 1 copy each of membrane proteins PsbA, PsbB, PsbC, PsbD, PsbE, PsbF, PsbH, PsbI, PsbJ, PsbK, PsbL, PsbM, PsbT, PsbX, PsbY, PsbZ, Psb30/Ycf12, peripheral proteins PsbO, CyanoQ (PsbQ), PsbU, PsbV and a large number of cofactors. It forms dimeric complexes.

The protein localises to the cellular thylakoid membrane. In terms of biological role, one of the components of the core complex of photosystem II (PSII). PSII is a light-driven water:plastoquinone oxidoreductase that uses light energy to abstract electrons from H(2)O, generating O(2) and a proton gradient subsequently used for ATP formation. It consists of a core antenna complex that captures photons, and an electron transfer chain that converts photonic excitation into a charge separation. This is Photosystem II reaction center protein K from Parasynechococcus marenigrum (strain WH8102).